The chain runs to 218 residues: Esterase FPY3 (218 aa).

Catalysis depends on charge relay system residues Ser95, Asp163, and His190.

The protein belongs to the LovG family.

Its pathway is secondary metabolite biosynthesis. In terms of biological role, esterase; part of the gene cluster that mediates the biosynthesis of the gamma-pyrones fusapyrone (FPY) and deoxyfusapyrone (dFPY). FPY is an undecaketide and thus likely synthesized by the polyketide synthase FPY1 from acetyl-CoA functioning as starter unit and the addition of 10 malonyl-CoA extender units by successive Claisen-condensations. Next to this, FPY shares some rare features: C-glycosylated 4-deoxyglucose at C-3, a gem-dimethyl group at C-13, and an alpha-beta to beta-gamma double bond shift at C-20. During FPY biosynthesis mono-C-methyl groups are transferred to the tetra-, penta-, hexa- and heptaketide, while two C-methyl groups are transferred to the nonaketide, suggesting that the CMet domain is programmed to selectively catalyze two successive C-alpha-methylation reactions of the nonaketide, while other alpha-carbons are non- or mono-methylated only. While the origin of the 4'-deoxyglucose moiety remains opaque, its transfer to C-3 is most likely mediated by the C-glycosyltransferase FPY2. Next to this, the hydroxyl group present at C-33 and discriminating between FPY and dFPY, is likely to be installed by the cytochrome P450 monooxygenase FPY7. No putative function can be predicted for the remaining genes FPY3-FPY6. The protein is Esterase FPY3 of Fusarium mangiferae (Mango malformation disease fungus).